The following is a 148-amino-acid chain: Putative nickel-responsive regulator (148 aa).

His-88, His-99, His-101, and Cys-107 together coordinate Ni(2+).

This sequence belongs to the transcriptional regulatory CopG/NikR family. Ni(2+) serves as cofactor.

Functionally, transcriptional regulator. This chain is Putative nickel-responsive regulator, found in Helicobacter acinonychis (strain Sheeba).